The following is a 610-amino-acid chain: Elongation factor 4 (610 aa).

In terms of domain architecture, tr-type G spans 14–198; it reads ANIRNFSIVA…AIVTRLPPPQ (185 aa). GTP is bound by residues 26–31 and 145–148; these read DHGKST and NKVD.

It belongs to the TRAFAC class translation factor GTPase superfamily. Classic translation factor GTPase family. LepA subfamily.

The protein localises to the cell inner membrane. The enzyme catalyses GTP + H2O = GDP + phosphate + H(+). In terms of biological role, required for accurate and efficient protein synthesis under certain stress conditions. May act as a fidelity factor of the translation reaction, by catalyzing a one-codon backward translocation of tRNAs on improperly translocated ribosomes. Back-translocation proceeds from a post-translocation (POST) complex to a pre-translocation (PRE) complex, thus giving elongation factor G a second chance to translocate the tRNAs correctly. Binds to ribosomes in a GTP-dependent manner. In Nitrobacter hamburgensis (strain DSM 10229 / NCIMB 13809 / X14), this protein is Elongation factor 4.